The sequence spans 77 residues: Small ribosomal subunit protein bS16 (77 aa).

The protein belongs to the bacterial ribosomal protein bS16 family.

In Wolinella succinogenes (strain ATCC 29543 / DSM 1740 / CCUG 13145 / JCM 31913 / LMG 7466 / NCTC 11488 / FDC 602W) (Vibrio succinogenes), this protein is Small ribosomal subunit protein bS16.